Consider the following 557-residue polypeptide: (-)-germacrene D synthase (557 aa).

3 residues coordinate Mg(2+): D310, D314, and E462. Positions 310–314 (DDIYD) match the DDXXD motif motif.

It belongs to the terpene synthase family. Tpsa subfamily. The cofactor is Mg(2+). As to expression, expressed in flowers. Detected in stems, young leaves and tendrils.

The protein localises to the cytoplasm. The enzyme catalyses (2E,6E)-farnesyl diphosphate + H2O = (1E,4S,5E,7R)-germacra-1(10),5-dien-11-ol + diphosphate. It carries out the reaction (2E,6E)-farnesyl diphosphate = (-)-germacrene D + diphosphate. It participates in secondary metabolite biosynthesis; terpenoid biosynthesis. Involved in the biosynthesis of germacrene D. Can use farnesyl diphosphate as substrate, but not geranyl diphosphate or geranylgeranyl diphosphate. Produces mainly (-)-germacrene D along with gamma-cadinene. This chain is (-)-germacrene D synthase, found in Vitis vinifera (Grape).